Consider the following 629-residue polypeptide: Microtubule-associated protein 70-3 (629 aa).

Residues Met-1 to Ser-54 are disordered. Polar residues predominate over residues Gly-13–Met-33. Positions Val-75 to Gln-375 form a coiled coil. Positions Ile-257 to Thr-493 are required for targeting to microtubules. 3 disordered regions span residues Leu-391–Ala-421, Gly-458–Pro-519, and Ala-578–Gln-629. Over residues Gly-393–Gln-416 the composition is skewed to polar residues. Positions Leu-544 to Gly-592 form a coiled coil. The segment covering Ala-578–Arg-596 has biased composition (basic and acidic residues). The span at Asn-603–Leu-613 shows a compositional bias: polar residues.

This sequence belongs to the MAP70 family.

The protein localises to the cytoplasm. It is found in the cytoskeleton. Its function is as follows. Plant-specific protein that interact with microtubules. The protein is Microtubule-associated protein 70-3 (MAP70.3) of Arabidopsis thaliana (Mouse-ear cress).